Consider the following 260-residue polypeptide: NH(3)-dependent NAD(+) synthetase (260 aa).

Residue 31-38 (GLSGGLDS) coordinates ATP. Asp37 lines the Mg(2+) pocket. A deamido-NAD(+)-binding site is contributed by Arg112. Position 132 (Thr132) interacts with ATP. Glu137 serves as a coordination point for Mg(2+). ATP is bound by residues Lys161 and Ser183.

This sequence belongs to the NAD synthetase family. In terms of assembly, homodimer.

The enzyme catalyses deamido-NAD(+) + NH4(+) + ATP = AMP + diphosphate + NAD(+) + H(+). The protein operates within cofactor biosynthesis; NAD(+) biosynthesis; NAD(+) from deamido-NAD(+) (ammonia route): step 1/1. Its function is as follows. Catalyzes the ATP-dependent amidation of deamido-NAD to form NAD. Uses ammonia as a nitrogen source. This is NH(3)-dependent NAD(+) synthetase from Helicobacter pylori (strain G27).